We begin with the raw amino-acid sequence, 762 residues long: Pyrophosphate-energized vacuolar membrane proton pump (762 aa).

The Intravacuolar portion of the chain corresponds to Met1–Glu6. Residues Leu7–Lys33 form a helical membrane-spanning segment. Topologically, residues Val34–Gly81 are cytoplasmic. The chain crosses the membrane as a helical span at residues Ala82–Ile111. Topologically, residues Glu112–Ala131 are intravacuolar. The cysteines at positions 121 and 128 are disulfide-linked. A helical transmembrane segment spans residues Leu132–Ile159. Residues Ala160–Ala182 are Cytoplasmic-facing. The chain crosses the membrane as a helical span at residues Phe183–Tyr212. The Intravacuolar segment spans residues Gly213 to Asp215. The chain crosses the membrane as a helical span at residues Trp216–Tyr244. Residues Thr245 to Gly282 are Cytoplasmic-facing. A substrate-binding site is contributed by Lys246. The Mg(2+) site is built by Asp249, Asp253, and Asp279. Residues Asp283–Ile308 form a helical membrane-spanning segment. Over Ser309–Asp316 the chain is Intravacuolar. Residues Phe317–Thr342 form a helical membrane-spanning segment. The Cytoplasmic segment spans residues Asp343–Ala350. A helical membrane pass occupies residues Asn351–Leu378. Residues Ala379–Asn397 lie on the Intravacuolar side of the membrane. The helical transmembrane segment at Trp398–Tyr421 threads the bilayer. Over Thr422 to Asn443 the chain is Cytoplasmic. Residues Val444–Val468 form a helical membrane-spanning segment. Topologically, residues Ser469 to Ala474 are intravacuolar. The helical transmembrane segment at Met475 to Ile501 threads the bilayer. The Cytoplasmic segment spans residues Ser502–Asn530. The Mg(2+) site is built by Asp503 and Asn530. The chain crosses the membrane as a helical span at residues Thr531 to Ala559. Topologically, residues Gly560–Pro569 are intravacuolar. A helical transmembrane segment spans residues Lys570–Leu598. Over Lys599–Val627 the chain is Cytoplasmic. A helical transmembrane segment spans residues Lys628 to Phe656. Gly657 is a topological domain (intravacuolar). Residues Val658–Ala685 traverse the membrane as a helical segment. Residues Trp686–Thr728 lie on the Cytoplasmic side of the membrane. Mg(2+)-binding residues include Asp687 and Asp723. Position 726 (Lys726) interacts with substrate. Residues Ser729 to Tyr754 form a helical membrane-spanning segment. Residues Gly755–Ile762 lie on the Intravacuolar side of the membrane.

Belongs to the H(+)-translocating pyrophosphatase (TC 3.A.10) family. K(+)-stimulated subfamily. Monomer.

It is found in the vacuole membrane. It carries out the reaction diphosphate + H2O + H(+)(in) = 2 phosphate + 2 H(+)(out). Contributes to the transtonoplast (from cytosol to vacuole lumen) H(+)-electrochemical potential difference. It establishes a proton gradient of similar and often greater magnitude than the H(+)-ATPase on the same membrane. The sequence is that of Pyrophosphate-energized vacuolar membrane proton pump from Hordeum vulgare (Barley).